The following is a 699-amino-acid chain: Keratinocyte proline-rich protein (699 aa).

Serine 436 is modified (phosphoserine). Pro residues-rich tracts occupy residues 448 to 477 and 513 to 533; these read PYPRPEPCPSPEPRPCPRPRPRPEPCPSPE and DPCPSPEPRPRPCPEPCPSPE. Residues 448–533 form a disordered region; sequence PYPRPEPCPS…PCPEPCPSPE (86 aa).

In terms of tissue distribution, expressed in the stratified squamous epithelial layers of the skin, esophagus and tongue.

It localises to the cytoplasm. In Rattus norvegicus (Rat), this protein is Keratinocyte proline-rich protein (Kprp).